Consider the following 298-residue polypeptide: Heat stress transcription factor C-2a (298 aa).

The tract at residues 105-128 is disordered; sequence SSGGGGAKRKEEAGGCGGGGEAAA. The interval 145–181 is hydrophobic repeat HR-A/B; that stretch reads LRREQREIEGRVAAMWRRVQETERRPKQMLAFLVKVV. The Nuclear localization signal signature appears at 213–216; sequence KRPR.

The protein belongs to the HSF family. Class C subfamily. Homotrimer. In terms of processing, exhibits temperature-dependent phosphorylation.

Its subcellular location is the nucleus. In terms of biological role, transcriptional regulator that specifically binds DNA of heat shock promoter elements (HSE). The polypeptide is Heat stress transcription factor C-2a (HSFC2A) (Oryza sativa subsp. japonica (Rice)).